Reading from the N-terminus, the 297-residue chain is Nitrogenase iron protein (297 aa).

ATP is bound at residue 11–18; that stretch reads GKGGIGKS. Cys-99 is a [4Fe-4S] cluster binding site. Residue Arg-102 is modified to ADP-ribosylarginine; by dinitrogenase reductase ADP-ribosyltransferase. Cys-133 is a [4Fe-4S] cluster binding site.

This sequence belongs to the NifH/BchL/ChlL family. Homodimer. [4Fe-4S] cluster is required as a cofactor. Post-translationally, the reversible ADP-ribosylation of Arg-102 inactivates the nitrogenase reductase and regulates nitrogenase activity.

It carries out the reaction N2 + 8 reduced [2Fe-2S]-[ferredoxin] + 16 ATP + 16 H2O = H2 + 8 oxidized [2Fe-2S]-[ferredoxin] + 2 NH4(+) + 16 ADP + 16 phosphate + 6 H(+). Its function is as follows. The key enzymatic reactions in nitrogen fixation are catalyzed by the nitrogenase complex, which has 2 components: the iron protein and the molybdenum-iron protein. The protein is Nitrogenase iron protein of Mesorhizobium japonicum (strain LMG 29417 / CECT 9101 / MAFF 303099) (Mesorhizobium loti (strain MAFF 303099)).